A 433-amino-acid polypeptide reads, in one-letter code: Sulfhydrylase FUB7 (433 aa).

Lys211 carries the N6-(pyridoxal phosphate)lysine modification.

The protein belongs to the trans-sulfuration enzymes family. The cofactor is pyridoxal 5'-phosphate.

The protein operates within mycotoxin biosynthesis. Functionally, sulfhydrylase; part of the gene cluster that mediates the biosynthesis of fusaric acid, a mycotoxin with low to moderate toxicity to animals and humans, but with high phytotoxic properties. L-aspartate is suggested as fusaric acid amino acid precursor that is activated and further processed to O-acetyl-L-homoserine by cluster enzymes aspartate kinase FUB3 and homoserine O-acetyltransferase FUB5, as well as enzymes of the primary metabolism. The polyketide synthase (PKS) FUB1 generates the triketide trans-2-hexenal which is presumptively released by the hydrolase FUB4 and linked to the NRPS-bound amino acid precursor by NAD(P)-dependent dehydrogenase FUB6. FUB1, FUB4, and the non-canonical NRPS Fub8 may form an enzyme complex. Further processing of the NRPS-bound intermediate might be carried out by FUB6 and the O-acetylhomoserine FUB7, enabling a spontaneous electrocyclization to close the carbon backbone of fusaric acid. Dihydrofusaric acid is likely to be released via reduction by the thioester reductase (TR) domain of FUB8 whereupon the final oxidation to fusaric acid may (also) be performed by the FMN-dependent dehydrogenase FUB9. The chain is Sulfhydrylase FUB7 from Gibberella moniliformis (strain M3125 / FGSC 7600) (Maize ear and stalk rot fungus).